The primary structure comprises 263 residues: Proteasome subunit alpha type-1 (263 aa).

Residue Met1 is modified to N-acetylmethionine. Residue Ser110 is modified to Phosphoserine; alternate. O-linked (GlcNAc) serine; alternate glycosylation is present at Ser110. Lys115 participates in a covalent cross-link: Glycyl lysine isopeptide (Lys-Gly) (interchain with G-Cter in ubiquitin). Ser177 carries the phosphoserine modification. A Glycyl lysine isopeptide (Lys-Gly) (interchain with G-Cter in ubiquitin) cross-link involves residue Lys208. The segment at 232–263 is disordered; that stretch reads FLDGLEERPQRKAQPSQAAEEPAEKADEPMEH. Over residues 253–263 the composition is skewed to basic and acidic residues; it reads PAEKADEPMEH.

Belongs to the peptidase T1A family. The 26S proteasome consists of a 20S proteasome core and two 19S regulatory subunits. The 20S proteasome core is a barrel-shaped complex made of 28 subunits that are arranged in four stacked rings. The two outer rings are each formed by seven alpha subunits, and the two inner rings are formed by seven beta subunits. The proteolytic activity is exerted by three beta-subunits PSMB5, PSMB6 and PSMB7. Interacts with NOTCH3. Interacts with ZFAND1. C-terminal extension is partially cleaved off by limited proteolysis leading to a conversion of the proteasome from its latent into its active form. As to expression, detected in liver (at protein level).

Its subcellular location is the cytoplasm. It is found in the nucleus. Its function is as follows. Component of the 20S core proteasome complex involved in the proteolytic degradation of most intracellular proteins. This complex plays numerous essential roles within the cell by associating with different regulatory particles. Associated with two 19S regulatory particles, forms the 26S proteasome and thus participates in the ATP-dependent degradation of ubiquitinated proteins. The 26S proteasome plays a key role in the maintenance of protein homeostasis by removing misfolded or damaged proteins that could impair cellular functions, and by removing proteins whose functions are no longer required. Associated with the PA200 or PA28, the 20S proteasome mediates ubiquitin-independent protein degradation. This type of proteolysis is required in several pathways including spermatogenesis (20S-PA200 complex) or generation of a subset of MHC class I-presented antigenic peptides (20S-PA28 complex). The sequence is that of Proteasome subunit alpha type-1 (Psma1) from Mus musculus (Mouse).